Reading from the N-terminus, the 421-residue chain is Gamma-glutamyl phosphate reductase (421 aa).

This sequence belongs to the gamma-glutamyl phosphate reductase family.

It localises to the cytoplasm. It catalyses the reaction L-glutamate 5-semialdehyde + phosphate + NADP(+) = L-glutamyl 5-phosphate + NADPH + H(+). Its pathway is amino-acid biosynthesis; L-proline biosynthesis; L-glutamate 5-semialdehyde from L-glutamate: step 2/2. Catalyzes the NADPH-dependent reduction of L-glutamate 5-phosphate into L-glutamate 5-semialdehyde and phosphate. The product spontaneously undergoes cyclization to form 1-pyrroline-5-carboxylate. The polypeptide is Gamma-glutamyl phosphate reductase (Pseudomonas fluorescens (strain ATCC BAA-477 / NRRL B-23932 / Pf-5)).